Reading from the N-terminus, the 552-residue chain is Urocanate hydratase (552 aa).

NAD(+) contacts are provided by residues glycine 49–glycine 50, glutamine 127, glycine 173–glycine 175, aspartate 193, asparagine 239–alanine 240, glutamine 260–histidine 264, tyrosine 270–isoleucine 271, and tyrosine 319. The active site involves cysteine 407. Glycine 489 provides a ligand contact to NAD(+).

The protein belongs to the urocanase family. It depends on NAD(+) as a cofactor.

The protein resides in the cytoplasm. The catalysed reaction is 4-imidazolone-5-propanoate = trans-urocanate + H2O. It functions in the pathway amino-acid degradation; L-histidine degradation into L-glutamate; N-formimidoyl-L-glutamate from L-histidine: step 2/3. Catalyzes the conversion of urocanate to 4-imidazolone-5-propionate. This chain is Urocanate hydratase, found in Bacillus cereus (strain ATCC 10987 / NRS 248).